The primary structure comprises 228 residues: Uridylate kinase (228 aa).

9 to 10 (GS) provides a ligand contact to ATP. Residue G44 coordinates UMP. ATP contacts are provided by G45 and R49. UMP contacts are provided by residues D66 and 114-120 (IVAAQTT). Residues T140, Y146, and D149 each contribute to the ATP site.

The protein belongs to the UMP kinase family. In terms of assembly, homohexamer.

The protein resides in the cytoplasm. It carries out the reaction UMP + ATP = UDP + ADP. Its pathway is pyrimidine metabolism; CTP biosynthesis via de novo pathway; UDP from UMP (UMPK route): step 1/1. With respect to regulation, inhibited by UTP. Catalyzes the reversible phosphorylation of UMP to UDP. In Haloarcula marismortui (strain ATCC 43049 / DSM 3752 / JCM 8966 / VKM B-1809) (Halobacterium marismortui), this protein is Uridylate kinase.